We begin with the raw amino-acid sequence, 154 residues long: Small ribosomal subunit protein bS18 (154 aa).

The interval 1–82 (MEKKTTKKAT…PFAKYNRGYP (82 aa)) is disordered. The span at 8-19 (KATASKTTTTKK) shows a compositional bias: low complexity. A compositionally biased stretch (basic and acidic residues) spans 20-32 (AAAEKTEIKETKK). Residues 33-49 (TTTTKTSTAKKATTASV) show a composition bias toward low complexity. The span at 50–69 (EKTEVKETKKSSDNKKEFNP) shows a compositional bias: basic and acidic residues.

The protein belongs to the bacterial ribosomal protein bS18 family. As to quaternary structure, part of the 30S ribosomal subunit. Forms a tight heterodimer with protein bS6.

Functionally, binds as a heterodimer with protein bS6 to the central domain of the 16S rRNA, where it helps stabilize the platform of the 30S subunit. This Malacoplasma penetrans (strain HF-2) (Mycoplasma penetrans) protein is Small ribosomal subunit protein bS18.